Consider the following 434-residue polypeptide: Hydrogenobyrinate a,c-diamide synthase (434 aa).

The region spanning 243–434 (RIAVARDIAF…MHLIDVAGAA (192 aa)) is the GATase cobBQ-type domain. Residue cysteine 326 is the Nucleophile of the active site.

This sequence belongs to the CobB/CbiA family. As to quaternary structure, homodimer. Mg(2+) is required as a cofactor.

The enzyme catalyses hydrogenobyrinate + 2 L-glutamine + 2 ATP + 2 H2O = hydrogenobyrinate a,c-diamide + 2 L-glutamate + 2 ADP + 2 phosphate + 2 H(+). Its pathway is cofactor biosynthesis; adenosylcobalamin biosynthesis; cob(II)yrinate a,c-diamide from precorrin-2 (aerobic route): step 9/10. Catalyzes the ATP-dependent amidation of the two carboxylate groups at positions a and c of hydrogenobyrinate, using either L-glutamine or ammonia as the nitrogen source. To a much lesser extent, can also use cobyrinate as substrate in vitro, but the physiological substrate is indeed hydrogenobyrinate, as part of the aerobic pathway for cobalamin biosynthesis. The sequence is that of Hydrogenobyrinate a,c-diamide synthase from Sinorhizobium sp.